The chain runs to 681 residues: DNA ligase (681 aa).

Residues 34-38 (DEEYD), 83-84 (SL), and glutamate 112 contribute to the NAD(+) site. The active-site N6-AMP-lysine intermediate is lysine 114. Residues arginine 135, glutamate 169, lysine 285, and lysine 309 each contribute to the NAD(+) site. Residues cysteine 403, cysteine 406, cysteine 422, and cysteine 427 each contribute to the Zn(2+) site. One can recognise a BRCT domain in the interval 584–673 (TTSNILDGLT…GVELKESWKK (90 aa)).

The protein belongs to the NAD-dependent DNA ligase family. LigA subfamily. Mg(2+) serves as cofactor. Requires Mn(2+) as cofactor.

The enzyme catalyses NAD(+) + (deoxyribonucleotide)n-3'-hydroxyl + 5'-phospho-(deoxyribonucleotide)m = (deoxyribonucleotide)n+m + AMP + beta-nicotinamide D-nucleotide.. Its function is as follows. DNA ligase that catalyzes the formation of phosphodiester linkages between 5'-phosphoryl and 3'-hydroxyl groups in double-stranded DNA using NAD as a coenzyme and as the energy source for the reaction. It is essential for DNA replication and repair of damaged DNA. The chain is DNA ligase from Fervidobacterium nodosum (strain ATCC 35602 / DSM 5306 / Rt17-B1).